The primary structure comprises 248 residues: Ubiquinone/menaquinone biosynthesis C-methyltransferase UbiE (248 aa).

Residues serine 68, aspartate 92, and asparagine 120–alanine 121 each bind S-adenosyl-L-methionine.

This sequence belongs to the class I-like SAM-binding methyltransferase superfamily. MenG/UbiE family.

It carries out the reaction a 2-demethylmenaquinol + S-adenosyl-L-methionine = a menaquinol + S-adenosyl-L-homocysteine + H(+). It catalyses the reaction a 2-methoxy-6-(all-trans-polyprenyl)benzene-1,4-diol + S-adenosyl-L-methionine = a 5-methoxy-2-methyl-3-(all-trans-polyprenyl)benzene-1,4-diol + S-adenosyl-L-homocysteine + H(+). It participates in quinol/quinone metabolism; menaquinone biosynthesis; menaquinol from 1,4-dihydroxy-2-naphthoate: step 2/2. Its pathway is cofactor biosynthesis; ubiquinone biosynthesis. Its function is as follows. Methyltransferase required for the conversion of demethylmenaquinol (DMKH2) to menaquinol (MKH2) and the conversion of 2-polyprenyl-6-methoxy-1,4-benzoquinol (DDMQH2) to 2-polyprenyl-3-methyl-6-methoxy-1,4-benzoquinol (DMQH2). The polypeptide is Ubiquinone/menaquinone biosynthesis C-methyltransferase UbiE (Rickettsia prowazekii (strain Madrid E)).